The primary structure comprises 377 residues: Nitric oxide reductase FlRd-NAD(+) reductase (377 aa).

This sequence belongs to the FAD-dependent oxidoreductase family. Requires FAD as cofactor.

It localises to the cytoplasm. The enzyme catalyses 2 reduced [nitric oxide reductase rubredoxin domain] + NAD(+) + H(+) = 2 oxidized [nitric oxide reductase rubredoxin domain] + NADH. The protein operates within nitrogen metabolism; nitric oxide reduction. Its function is as follows. One of at least two accessory proteins for anaerobic nitric oxide (NO) reductase. Reduces the rubredoxin moiety of NO reductase. The protein is Nitric oxide reductase FlRd-NAD(+) reductase of Escherichia coli O81 (strain ED1a).